The chain runs to 109 residues: RNA-binding protein Hfq (109 aa).

The Sm domain occupies 9 to 68 (DPFLNALRKEKVSVSVYLVNGIKLQGQVEAFDQFCIVLRNTVNQMVYKHAISTIVPAKSV).

This sequence belongs to the Hfq family. As to quaternary structure, homohexamer.

RNA chaperone that binds small regulatory RNA (sRNAs) and mRNAs to facilitate mRNA translational regulation in response to envelope stress, environmental stress and changes in metabolite concentrations. Also binds with high specificity to tRNAs. The protein is RNA-binding protein Hfq of Francisella philomiragia subsp. philomiragia (strain ATCC 25017 / CCUG 19701 / FSC 153 / O#319-036).